We begin with the raw amino-acid sequence, 164 residues long: uncharacterized protein (164 aa).

Its subcellular location is the mitochondrion. This is an uncharacterized protein from Arabidopsis thaliana (Mouse-ear cress).